A 128-amino-acid polypeptide reads, in one-letter code: Ribonuclease P protein component (128 aa).

Belongs to the RnpA family. In terms of assembly, consists of a catalytic RNA component (M1 or rnpB) and a protein subunit.

It catalyses the reaction Endonucleolytic cleavage of RNA, removing 5'-extranucleotides from tRNA precursor.. In terms of biological role, RNaseP catalyzes the removal of the 5'-leader sequence from pre-tRNA to produce the mature 5'-terminus. It can also cleave other RNA substrates such as 4.5S RNA. The protein component plays an auxiliary but essential role in vivo by binding to the 5'-leader sequence and broadening the substrate specificity of the ribozyme. This chain is Ribonuclease P protein component, found in Prochlorococcus marinus (strain MIT 9313).